Consider the following 358-residue polypeptide: Glycerol-3-phosphate dehydrogenase [NAD(P)+] (358 aa).

Positions 33, 34, 54, and 128 each coordinate NADPH. Residues Lys128 and Gly156 each coordinate sn-glycerol 3-phosphate. Position 160 (Ala160) interacts with NADPH. Residues Lys211, Asp264, Ser274, Arg275, and Asn276 each coordinate sn-glycerol 3-phosphate. The Proton acceptor role is filled by Lys211. Residue Arg275 coordinates NADPH. NADPH-binding residues include Val299 and Glu301.

Belongs to the NAD-dependent glycerol-3-phosphate dehydrogenase family.

It is found in the cytoplasm. It carries out the reaction sn-glycerol 3-phosphate + NAD(+) = dihydroxyacetone phosphate + NADH + H(+). It catalyses the reaction sn-glycerol 3-phosphate + NADP(+) = dihydroxyacetone phosphate + NADPH + H(+). It participates in membrane lipid metabolism; glycerophospholipid metabolism. In terms of biological role, catalyzes the reduction of the glycolytic intermediate dihydroxyacetone phosphate (DHAP) to sn-glycerol 3-phosphate (G3P), the key precursor for phospholipid synthesis. This chain is Glycerol-3-phosphate dehydrogenase [NAD(P)+], found in Saccharophagus degradans (strain 2-40 / ATCC 43961 / DSM 17024).